The sequence spans 224 residues: uncharacterized protein (224 aa).

Positions 203–224 are disordered; it reads ELKKKKKKKIKKPKEIRNQKNV. The span at 204-214 shows a compositional bias: basic residues; that stretch reads LKKKKKKKIKK. The span at 215-224 shows a compositional bias: basic and acidic residues; the sequence is PKEIRNQKNV.

This is an uncharacterized protein from Mycoplasma genitalium (strain ATCC 33530 / DSM 19775 / NCTC 10195 / G37) (Mycoplasmoides genitalium).